The primary structure comprises 443 residues: Protein UIP5 (443 aa).

A signal peptide spans 1-27 (MSRDVRAEKLAISLLILSLFLIFQLVA). The Perinuclear space segment spans residues 28–398 (EIYLNNGDQY…LFKVVLTIWH (371 aa)). Residues 399–420 (YSEILLLIMGIYLFSACIRVFQ) form a helical membrane-spanning segment. Residues 421-443 (RRFKKIRSRRKRAGSHSVGLLPM) are Cytoplasmic-facing.

It is found in the nucleus membrane. This Saccharomyces cerevisiae (strain ATCC 204508 / S288c) (Baker's yeast) protein is Protein UIP5 (UIP5).